A 168-amino-acid chain; its full sequence is GTP-dependent dephospho-CoA kinase (168 aa).

GTP contacts are provided by Asp-49, Ile-50, Val-51, Asp-68, Lys-70, and Glu-120.

This sequence belongs to the GTP-dependent DPCK family.

The enzyme catalyses 3'-dephospho-CoA + GTP = GDP + CoA + H(+). Its pathway is cofactor biosynthesis; coenzyme A biosynthesis. Its function is as follows. Catalyzes the GTP-dependent phosphorylation of the 3'-hydroxyl group of dephosphocoenzyme A to form coenzyme A (CoA). The chain is GTP-dependent dephospho-CoA kinase from Pyrobaculum islandicum (strain DSM 4184 / JCM 9189 / GEO3).